Here is a 509-residue protein sequence, read N- to C-terminus: Scavenger receptor class B member 1 (509 aa).

Residues 1-11 are Cytoplasmic-facing; the sequence is MGSRSRARQVA. The chain crosses the membrane as a helical span at residues 12-32; it reads AALGFVGLLLAALGAVMIVMV. Over 33 to 439 the chain is Extracellular; the sequence is PSIIKQQVLK…FYTQLVLMPK (407 aa). 8 N-linked (GlcNAc...) asparagine glycosylation sites follow: Asn-102, Asn-108, Asn-173, Asn-212, Asn-255, Asn-310, Asn-330, and Asn-383. Cys-251 and Cys-384 form a disulfide bridge. Residues 440–460 form a helical membrane-spanning segment; that stretch reads VLHYAQYVLLALGCVLLFIPI. Topologically, residues 461 to 509 are cytoplasmic; it reads VYQIRSQEKCYLFWSSSKKGSKDKEAIQAYSESLMTPAPKGTVLQEARL.

This sequence belongs to the CD36 family. The C-terminal region binds to PDZK1. In terms of processing, N-glycosylated. Post-translationally, the six cysteines of the extracellular domain are all involved in intramolecular disulfide bonds.

The protein localises to the cell membrane. Its subcellular location is the membrane. It is found in the caveola. Its function is as follows. Receptor for different ligands such as phospholipids, cholesterol ester, lipoproteins, phosphatidylserine and apoptotic cells. Receptor for HDL, mediating selective uptake of cholesteryl ether and HDL-dependent cholesterol efflux. Also facilitates the flux of free and esterified cholesterol between the cell surface and apoB-containing lipoproteins and modified lipoproteins, although less efficiently than HDL. May be involved in the phagocytosis of apoptotic cells, via its phosphatidylserine binding activity. This chain is Scavenger receptor class B member 1 (SCARB1), found in Sus scrofa (Pig).